We begin with the raw amino-acid sequence, 516 residues long: Chromosomal replication initiator protein DnaA (516 aa).

Residues 1–72 are domain I, interacts with DnaA modulators; that stretch reads MSLEHWNLCL…LLSEFAGDDL (72 aa). The segment at 72–179 is domain II; that stretch reads LAPALKLAVK…QVEGGINHGA (108 aa). Residues 180–396 form a domain III, AAA+ region region; that stretch reads NLNNSFTFDN…GALKRVIANS (217 aa). Residues Gly-224, Gly-226, Lys-227, and Thr-228 each contribute to the ATP site. The tract at residues 397–516 is domain IV, binds dsDNA; it reads HFTGRAITPD…YKQLMRILTT (120 aa).

Belongs to the DnaA family. Oligomerizes as a right-handed, spiral filament on DNA at oriC.

The protein localises to the cytoplasm. Plays an essential role in the initiation and regulation of chromosomal replication. ATP-DnaA binds to the origin of replication (oriC) to initiate formation of the DNA replication initiation complex once per cell cycle. Binds the DnaA box (a 9 base pair repeat at the origin) and separates the double-stranded (ds)DNA. Forms a right-handed helical filament on oriC DNA; dsDNA binds to the exterior of the filament while single-stranded (ss)DNA is stabiized in the filament's interior. The ATP-DnaA-oriC complex binds and stabilizes one strand of the AT-rich DNA unwinding element (DUE), permitting loading of DNA polymerase. After initiation quickly degrades to an ADP-DnaA complex that is not apt for DNA replication. Binds acidic phospholipids. The sequence is that of Chromosomal replication initiator protein DnaA from Marinomonas sp. (strain MWYL1).